Consider the following 326-residue polypeptide: DNA-directed RNA polymerase subunit alpha (326 aa).

The segment at 1 to 231 is alpha N-terminal domain (alpha-NTD); that stretch reads MQTNLLKPKI…DQLVVFAALE (231 aa). The segment at 247–326 is alpha C-terminal domain (alpha-CTD); it reads VDPMLMRPVD…ESWPPANLEK (80 aa).

This sequence belongs to the RNA polymerase alpha chain family. Homodimer. The RNAP catalytic core consists of 2 alpha, 1 beta, 1 beta' and 1 omega subunit. When a sigma factor is associated with the core the holoenzyme is formed, which can initiate transcription.

The catalysed reaction is RNA(n) + a ribonucleoside 5'-triphosphate = RNA(n+1) + diphosphate. Its function is as follows. DNA-dependent RNA polymerase catalyzes the transcription of DNA into RNA using the four ribonucleoside triphosphates as substrates. This Polynucleobacter necessarius subsp. necessarius (strain STIR1) protein is DNA-directed RNA polymerase subunit alpha.